A 347-amino-acid polypeptide reads, in one-letter code: Ribosomal RNA large subunit methyltransferase M (347 aa).

S-adenosyl-L-methionine-binding positions include serine 184, 217–220, aspartate 236, aspartate 256, and aspartate 272; that span reads APGG. The active-site Proton acceptor is the lysine 301.

Belongs to the class I-like SAM-binding methyltransferase superfamily. RNA methyltransferase RlmE family. RlmM subfamily. In terms of assembly, monomer.

The protein resides in the cytoplasm. It carries out the reaction cytidine(2498) in 23S rRNA + S-adenosyl-L-methionine = 2'-O-methylcytidine(2498) in 23S rRNA + S-adenosyl-L-homocysteine + H(+). Its function is as follows. Catalyzes the 2'-O-methylation at nucleotide C2498 in 23S rRNA. The protein is Ribosomal RNA large subunit methyltransferase M of Xanthomonas euvesicatoria pv. vesicatoria (strain 85-10) (Xanthomonas campestris pv. vesicatoria).